A 1035-amino-acid polypeptide reads, in one-letter code: Alpha-mannosidase B (1035 aa).

Positions 1–20 (MGKVLILFLFVLLLITFINC) are cleaved as a signal peptide. N-linked (GlcNAc...) asparagine glycosylation is found at N19 and N30. Residues H47 and D49 each contribute to the Zn(2+) site. A glycan (N-linked (GlcNAc...) asparagine) is linked at N63. D161 contacts Zn(2+). The active-site Nucleophile is D161. N-linked (GlcNAc...) asparagine glycans are attached at residues N245, N250, N270, N309, N327, and N438. Residue H446 coordinates Zn(2+). Residues N487, N497, N503, N710, N719, N735, N792, N852, N863, N880, N962, and N993 are each glycosylated (N-linked (GlcNAc...) asparagine).

Belongs to the glycosyl hydrolase 38 family. Zn(2+) is required as a cofactor.

It localises to the secreted. It catalyses the reaction Hydrolysis of terminal, non-reducing alpha-D-mannose residues in alpha-D-mannosides.. The protein is Alpha-mannosidase B (manB) of Dictyostelium discoideum (Social amoeba).